The primary structure comprises 838 residues: Leucine--tRNA ligase (838 aa).

Residues Pro38 to His48 carry the 'HIGH' region motif. Positions Lys608–Ser612 match the 'KMSKS' region motif. Lys611 provides a ligand contact to ATP.

This sequence belongs to the class-I aminoacyl-tRNA synthetase family.

It is found in the cytoplasm. The enzyme catalyses tRNA(Leu) + L-leucine + ATP = L-leucyl-tRNA(Leu) + AMP + diphosphate. The chain is Leucine--tRNA ligase from Orientia tsutsugamushi (strain Boryong) (Rickettsia tsutsugamushi).